The following is a 206-amino-acid chain: Sortase A (206 aa).

Residues 1–6 (MKKWTN) lie on the Cytoplasmic side of the membrane. A helical transmembrane segment spans residues 7–24 (RLMTIAGVVLILVAAYLF). Topologically, residues 25 to 206 (AKPHIDNYLH…RKIFVATEVK (182 aa)) are extracellular. Positions 49–69 (VKEQASKDKKQQAKPQIPKDK) are disordered. Ca(2+) contacts are provided by Glu105, Glu108, Asp112, and Asn114. The Proton donor/acceptor role is filled by His120. Glu171 is a binding site for Ca(2+). Cys184 acts as the Acyl-thioester intermediate in catalysis.

The protein belongs to the bacterial sortase family. Class A subfamily. In terms of assembly, monomer and homodimer; in equilibrium.

It is found in the cell membrane. The catalysed reaction is The enzyme catalyzes a cell wall sorting reaction in which a surface protein with a sorting signal containing a LPXTG motif is cleaved between the Thr and Gly residue. The resulting threonine carboxyl end of the protein is covalently attached to a pentaglycine cross-bridge of peptidoglycan.. Its activity is regulated as follows. Sortase activity is regulated by monomer-homodimer equilibrium. Mutant cells with monomeric SrtA display more adhesive proteins on the cell surface and are more invasive than wild-type cells, which have majority of SrtA in dimeric form. Dimerization may suppress the enzymatic activity on cell membranes. Stimulated by calcium ions, which promote substrate binding. Calcium ions bind to SrtA and modulate both the structure and dynamics of a large active site loop. Can also be stimulated, to a lesser extent, by Mg(2+) and Mn(2+). Inhibited by sulfhydryl-modifying reagents. Transpeptidase that anchors surface proteins to the cell wall. Recognizes and modifies its substrate by proteolytic cleavage of a C-terminal sorting signal. Following cleavage, a covalent intermediate is formed via a thioester bond between the sortase and its substrate, which is then transferred and covalently attached to the cell wall. This sortase recognizes a Leu-Pro-x-Thr-Gly (LPXTG) motif, which is cleaved by the sortase between the threonine and glycine residues. Utilizes lipid II as the peptidoglycan substrate for the sorting reaction. Responsible for the display of important virulence factors. Important for interactions with the host and host colonization during infection. The polypeptide is Sortase A (Staphylococcus aureus (strain NCTC 8325 / PS 47)).